Reading from the N-terminus, the 141-residue chain is Hemoglobin subunit alpha-1/2/3 (141 aa).

The 141-residue stretch at 1–141 (VLSPADKTNV…VGTVLTSKYR (141 aa)) folds into the Globin domain. S3 carries the post-translational modification Phosphoserine. The residue at position 7 (K7) is an N6-succinyllysine. Position 8 is a phosphothreonine (T8). Position 11 is an N6-succinyllysine (K11). K16 bears the N6-acetyllysine; alternate mark. K16 bears the N6-succinyllysine; alternate mark. Residue Y24 is modified to Phosphotyrosine. Residue S35 is modified to Phosphoserine. The residue at position 40 (K40) is an N6-succinyllysine. Residue S49 is modified to Phosphoserine. Residue H58 coordinates O2. H87 lines the heme b pocket. S102 is subject to Phosphoserine. Residue T108 is modified to Phosphothreonine. S124 and S131 each carry phosphoserine. Residues T134 and T137 each carry the phosphothreonine modification. S138 is modified (phosphoserine).

The protein belongs to the globin family. Heterotetramer of two alpha chains and two beta chains. As to expression, red blood cells.

Functionally, involved in oxygen transport from the lung to the various peripheral tissues. The sequence is that of Hemoglobin subunit alpha-1/2/3 from Macaca nemestrina (Pig-tailed macaque).